A 296-amino-acid polypeptide reads, in one-letter code: MTTTLKRPTDGEGSVQVHQDPSVNIEEETLVIAVYGKGGIGKSTTSSNLSAAFSKLGKRVLQIGCDPKHDSTFTLTHKMVPTVIDILEEVDFHSEELRPEDFVFSGFNGVQCVESGGPPAGTGCGGYVTGQTVKLLKEHHLLEDTDVVIFDVLGDVVCGGFAAPLQHANYCLIVTANDFDSIFAMNRIVQAIQAKAKNYKVRLGGVVANRSADTDQIDKFNERTGLRTMAHFKDVDAIRRSRLKKCTIFEMDDDDEAVQAVREEYLRLAQNMLDNVEPLEATSLKDREIFDLLGFD.

Residues 39–44 (GIGKST) and lysine 68 contribute to the ATP site. Serine 43 contacts Mg(2+). Cysteine 124 and cysteine 158 together coordinate [4Fe-4S] cluster. 209 to 210 (NR) is a binding site for ATP.

It belongs to the NifH/BchL/ChlL family. In terms of assembly, homodimer. Protochlorophyllide reductase is composed of three subunits; ChlL, ChlN and ChlB. The cofactor is [4Fe-4S] cluster.

The catalysed reaction is chlorophyllide a + oxidized 2[4Fe-4S]-[ferredoxin] + 2 ADP + 2 phosphate = protochlorophyllide a + reduced 2[4Fe-4S]-[ferredoxin] + 2 ATP + 2 H2O. Its pathway is porphyrin-containing compound metabolism; chlorophyll biosynthesis (light-independent). Component of the dark-operative protochlorophyllide reductase (DPOR) that uses Mg-ATP and reduced ferredoxin to reduce ring D of protochlorophyllide (Pchlide) to form chlorophyllide a (Chlide). This reaction is light-independent. The L component serves as a unique electron donor to the NB-component of the complex, and binds Mg-ATP. The chain is Light-independent protochlorophyllide reductase iron-sulfur ATP-binding protein from Synechococcus sp. (strain WH7803).